Here is a 750-residue protein sequence, read N- to C-terminus: MMRQYELVERVQRYKPDVNEALLNKAYVYAMQKHGSQKRASGDPYFSHPLEVAAILTDMHLDEATIAIALLHDTIEDTTATRQEIDQLFGPEIGKLVEGLTKLKKLDLVSKKAVQAENLRKLLLAISEDVRVLLVKLADRLHNMRTLGVMREDKRLRIAEETMDIYAPLAGRMGMQDMREELEELAFRYINPDAWRAVTDRLAELLEKNRGLLQKIETDLSEIFEKNGIKASVKSRQKKPWSVFRKMETKGLSFEQLSDIFGFRVMVDTVQDCYRALGLIHTTWSMVPGRFKDYISTPKQNDYRSIHTTIIGPSRQRIELQIRTREMDEIAEFGVAAHSIYKDRGSANNPHKISTETNAYAWLRQTIEQLSEGDNPEEFLEHTKLELFQDQVFCFTPKGRLIALPRGATPIDFAYAVHTDIGDSCVGAKVNGRIMPLMTELKNGDEVDIIRSKAQVPPAAWESLVATGKARAAIRRATRSAVRKQYSGLGMRILERAFERAGKPFSKDILKPGLPRLARKDVEDVLAAVGRGELPSADVVKAVYPDYQDTRVTTQNNPAKAGEKGWFNIQNAAGMIFKVPEGGEGAAAKVDPAATTPKPGKRALPIRGTNPDLPVRFAPEGAVPGDRIVGILQPGAGITIYPIQSPALTAYDDQPERWIDVRWDIDDQMSERFPARISVSAINSPGSLAEIAQIAAANDANIHNLSMARTAPDFTEMIIDVEVWDLKHLNRIISQLKESASVSSAKRVNG.

The HD domain maps to 45-144 (YFSHPLEVAA…VKLADRLHNM (100 aa)). Residues 390–451 (DQVFCFTPKG…KNGDEVDIIR (62 aa)) form the TGS domain. The segment at 587-613 (AAKVDPAATTPKPGKRALPIRGTNPDL) is disordered. Residues 676-750 (RISVSAINSP…SVSSAKRVNG (75 aa)) enclose the ACT domain.

Belongs to the RelA/SpoT family.

The enzyme catalyses GTP + ATP = guanosine 3'-diphosphate 5'-triphosphate + AMP. Its function is as follows. Functions as a (p)ppGpp synthase. In eubacteria ppGpp (guanosine 3'-diphosphate 5'-diphosphate) is a mediator of the stringent response that coordinates a variety of cellular activities in response to changes in nutritional abundance. Plays a role in adaptation of Brucella to its intracellular host environment. This chain is GTP pyrophosphokinase rsh (rsh), found in Brucella abortus (strain 2308).